Here is a 267-residue protein sequence, read N- to C-terminus: Octanoyltransferase (267 aa).

The disordered stretch occupies residues 1–30 (MPTGKLRQKPPYAAIMTNSPVTPSTETQQP). The segment covering 16 to 28 (MTNSPVTPSTETQ) has biased composition (polar residues). Residues 77-265 (GTASELVWLV…AFESVFGPRQ (189 aa)) enclose the BPL/LPL catalytic domain. Residues 116–123 (RGGEYTYH), 196–198 (AIG), and 209–211 (GIA) contribute to the substrate site. The active-site Acyl-thioester intermediate is C227.

Belongs to the LipB family.

The protein localises to the cytoplasm. It catalyses the reaction octanoyl-[ACP] + L-lysyl-[protein] = N(6)-octanoyl-L-lysyl-[protein] + holo-[ACP] + H(+). It participates in protein modification; protein lipoylation via endogenous pathway; protein N(6)-(lipoyl)lysine from octanoyl-[acyl-carrier-protein]: step 1/2. In terms of biological role, catalyzes the transfer of endogenously produced octanoic acid from octanoyl-acyl-carrier-protein onto the lipoyl domains of lipoate-dependent enzymes. Lipoyl-ACP can also act as a substrate although octanoyl-ACP is likely to be the physiological substrate. The sequence is that of Octanoyltransferase from Brucella abortus biovar 1 (strain 9-941).